A 148-amino-acid chain; its full sequence is Large ribosomal subunit protein uL15 (148 aa).

The segment at 1–57 (MRLNDVKPQKGSKKRRRRVGRGISAGQGASAGLGMRGQKSRSGSGTRPGFEGGQQPL) is disordered. Over residues 10–20 (KGSKKRRRRVG) the composition is skewed to basic residues. Positions 23–35 (ISAGQGASAGLGM) are enriched in gly residues.

It belongs to the universal ribosomal protein uL15 family. Part of the 50S ribosomal subunit.

Its function is as follows. Binds to the 23S rRNA. This chain is Large ribosomal subunit protein uL15, found in Nostoc sp. (strain PCC 7120 / SAG 25.82 / UTEX 2576).